Consider the following 152-residue polypeptide: Transcription elongation factor Spt5 (152 aa).

The KOW domain maps to 98–127; that stretch reads EGDLVEVVSGPFRGMQAQVVKVTEGKGEVV.

Belongs to the archaeal Spt5 family. Heterodimer composed of Spt4 and Spt5. Interacts with RNA polymerase (RNAP).

Stimulates transcription elongation. This Acidianus ambivalens (Desulfurolobus ambivalens) protein is Transcription elongation factor Spt5.